We begin with the raw amino-acid sequence, 129 residues long: Large ribosomal subunit protein bL12 (129 aa).

Residues 95–123 (MVESTPKSIKEGVSKEDAEEAKKSLEDAG) show a composition bias toward basic and acidic residues. A disordered region spans residues 95–129 (MVESTPKSIKEGVSKEDAEEAKKSLEDAGGKASLK).

This sequence belongs to the bacterial ribosomal protein bL12 family. As to quaternary structure, homodimer. Part of the ribosomal stalk of the 50S ribosomal subunit. Forms a multimeric L10(L12)X complex, where L10 forms an elongated spine to which 2 to 4 L12 dimers bind in a sequential fashion. Binds GTP-bound translation factors.

Forms part of the ribosomal stalk which helps the ribosome interact with GTP-bound translation factors. Is thus essential for accurate translation. This is Large ribosomal subunit protein bL12 from Acaryochloris marina (strain MBIC 11017).